We begin with the raw amino-acid sequence, 769 residues long: Serine/threonine-protein kinase PLK4 (769 aa).

A Protein kinase domain is found at 14–267; it reads YEVQHLLGKG…LEAVLCHPFM (254 aa). Residues 20–28 and K43 contribute to the ATP site; that span reads LGKGGFATV. The active-site Proton acceptor is D138. Positions 381–498 constitute a Cryptic POLO box 1 (CPB1) domain; it reads EDRISVPPLN…ARFVGLVKSK (118 aa). Positions 499–602 constitute a Cryptic POLO box 2 (CPB2) domain; the sequence is TPKVTYFSTL…GRRPITDVQP (104 aa). In terms of domain architecture, POLO box spans 660–739; that stretch reads PIKRINVPDI…IPNIQLKLKT (80 aa).

Belongs to the protein kinase superfamily. Ser/Thr protein kinase family. CDC5/Polo subfamily. In terms of assembly, homodimer. Post-translationally, ubiquitinated by the SCF(Slimb) ubiquitin ligase complex; leading to its degradation by the proteasome during interphase and regulating centriole number and ensuring the block to centriole reduplication.

It localises to the cytoplasm. The protein localises to the cytoskeleton. The protein resides in the microtubule organizing center. It is found in the centrosome. Its subcellular location is the centriole. The enzyme catalyses L-seryl-[protein] + ATP = O-phospho-L-seryl-[protein] + ADP + H(+). It carries out the reaction L-threonyl-[protein] + ATP = O-phospho-L-threonyl-[protein] + ADP + H(+). Serine/threonine-protein kinase that plays a central role in centriole duplication. Able to trigger procentriole formation on the surface of the mother centriole cylinder, using mother centriole as a platform, leading to the recruitment of centriole biogenesis proteins such as sas-6. When overexpressed, it is able to induce centrosome amplification through the simultaneous generation of multiple procentrioles adjoining each parental centriole during S phase. Centrosome amplification following overexpression can initiate tumorigenesis, highlighting the importance of centrosome regulation in cancers. This chain is Serine/threonine-protein kinase PLK4 (SAK), found in Drosophila simulans (Fruit fly).